The chain runs to 264 residues: H-2 class II histocompatibility antigen, E-Q beta chain (264 aa).

The signal sequence occupies residues 1–26 (MVWLPRVPCVAAVILLLTVLSPPVAL). The tract at residues 27 to 121 (VRDSRPWFLE…IFDNFLVRRR (95 aa)) is beta-1. Residues 27–225 (VRDSRPWFLE…KAQSTSAQNK (199 aa)) are Extracellular-facing. 2 cysteine pairs are disulfide-bonded: cysteine 38–cysteine 106 and cysteine 144–cysteine 200. N-linked (GlcNAc...) asparagine glycosylation occurs at asparagine 46. The segment at 122–225 (VEPTVTVYPT…KAQSTSAQNK (104 aa)) is beta-2. One can recognise an Ig-like C1-type domain in the interval 124-214 (PTVTVYPTKT…PSLTDPVTVE (91 aa)). The helical transmembrane segment at 226–246 (MLSGVGGFVLGLLFLGAGLFI) threads the bilayer. Residues 247-264 (YFRNQKGQSGLQPTGLLS) lie on the Cytoplasmic side of the membrane.

This sequence belongs to the MHC class II family.

It localises to the membrane. The chain is H-2 class II histocompatibility antigen, E-Q beta chain from Mus musculus (Mouse).